A 90-amino-acid chain; its full sequence is YcgL domain-containing protein YpsIP31758_2009 (90 aa).

In terms of domain architecture, YcgL spans 1–85 (MLCAIYRSPK…PPESLLKMHL (85 aa)).

The polypeptide is YcgL domain-containing protein YpsIP31758_2009 (Yersinia pseudotuberculosis serotype O:1b (strain IP 31758)).